The sequence spans 281 residues: Pantothenate synthetase (281 aa).

Residue 31-38 (MGNLHAGH) participates in ATP binding. The Proton donor role is filled by histidine 38. Glutamine 62 provides a ligand contact to (R)-pantoate. Glutamine 62 is a beta-alanine binding site. 150 to 153 (GKKD) serves as a coordination point for ATP. Residue glutamine 156 participates in (R)-pantoate binding. Residues valine 179 and 187-190 (MSSR) contribute to the ATP site.

It belongs to the pantothenate synthetase family. Homodimer.

Its subcellular location is the cytoplasm. The enzyme catalyses (R)-pantoate + beta-alanine + ATP = (R)-pantothenate + AMP + diphosphate + H(+). Its pathway is cofactor biosynthesis; (R)-pantothenate biosynthesis; (R)-pantothenate from (R)-pantoate and beta-alanine: step 1/1. In terms of biological role, catalyzes the condensation of pantoate with beta-alanine in an ATP-dependent reaction via a pantoyl-adenylate intermediate. This Xylella fastidiosa (strain M12) protein is Pantothenate synthetase.